The following is a 171-amino-acid chain: Probable chemoreceptor glutamine deamidase CheD 1 (171 aa).

Low complexity predominate over residues M1–E18. Residues M1 to G23 form a disordered region.

The protein belongs to the CheD family.

The catalysed reaction is L-glutaminyl-[protein] + H2O = L-glutamyl-[protein] + NH4(+). Its function is as follows. Probably deamidates glutamine residues to glutamate on methyl-accepting chemotaxis receptors (MCPs), playing an important role in chemotaxis. The protein is Probable chemoreceptor glutamine deamidase CheD 1 of Anaeromyxobacter dehalogenans (strain 2CP-C).